We begin with the raw amino-acid sequence, 151 residues long: Small ribosomal subunit protein uS13 (151 aa).

Belongs to the universal ribosomal protein uS13 family. In terms of assembly, part of the 30S ribosomal subunit. Forms a loose heterodimer with protein S19. Forms two bridges to the 50S subunit in the 70S ribosome.

In terms of biological role, located at the top of the head of the 30S subunit, it contacts several helices of the 16S rRNA. In the 70S ribosome it contacts the 23S rRNA (bridge B1a) and protein L5 of the 50S subunit (bridge B1b), connecting the 2 subunits; these bridges are implicated in subunit movement. The chain is Small ribosomal subunit protein uS13 from Hyperthermus butylicus (strain DSM 5456 / JCM 9403 / PLM1-5).